A 302-amino-acid polypeptide reads, in one-letter code: Pseudouridine-5'-phosphate glycosidase (302 aa).

Residue Glu-25 is the Proton donor of the active site. 2 residues coordinate substrate: Lys-86 and Val-106. Asp-138 contributes to the Mn(2+) binding site. Substrate is bound at residue 140 to 142 (SAD). Lys-159 serves as the catalytic Nucleophile.

Belongs to the pseudouridine-5'-phosphate glycosidase family. Homotrimer. It depends on Mn(2+) as a cofactor.

It carries out the reaction D-ribose 5-phosphate + uracil = psi-UMP + H2O. Functionally, catalyzes the reversible cleavage of pseudouridine 5'-phosphate (PsiMP) to ribose 5-phosphate and uracil. Functions biologically in the cleavage direction, as part of a pseudouridine degradation pathway. In Glaesserella parasuis serovar 5 (strain SH0165) (Haemophilus parasuis), this protein is Pseudouridine-5'-phosphate glycosidase.